Here is a 559-residue protein sequence, read N- to C-terminus: 5'-AMP-activated protein kinase catalytic subunit alpha-1 (559 aa).

One can recognise a Protein kinase domain in the interval 27–279 (YILGDTLGVG…IKDIREHEWF (253 aa)). Phosphothreonine is present on threonine 32. Residues 33-41 (LGVGTFGKV) and lysine 56 each bind ATP. The active-site Proton acceptor is the aspartate 150. Residue threonine 183 is modified to Phosphothreonine; by LKB1 and CaMKK2. Residues threonine 269 and threonine 355 each carry the phosphothreonine modification. Residues 302-381 (EALKEVCEKF…PERVPFLVAE (80 aa)) form an AIS region. Serine 356 carries the post-translational modification Phosphoserine. Serine 360 carries the post-translational modification Phosphoserine; by ULK1. Threonine 368 is subject to Phosphothreonine; by ULK1. A Phosphothreonine modification is found at threonine 382. Serine 397 carries the phosphoserine; by ULK1 modification. Phosphoserine is present on residues serine 467 and serine 486. Residues 484-536 (AKSGTATPQRSGSISNYRSCQRSDSDAEAQGKPSEVSLTSSVTSLDSSPVDVA) are disordered. The span at 485 to 505 (KSGTATPQRSGSISNYRSCQR) shows a compositional bias: polar residues. Residue serine 486 is modified to Phosphoserine; by ULK1. Threonine 488 carries the phosphothreonine; by ULK1 modification. A Phosphothreonine modification is found at threonine 490. Phosphoserine occurs at positions 496, 508, 524, and 527. A compositionally biased stretch (low complexity) spans 516-535 (PSEVSLTSSVTSLDSSPVDV).

This sequence belongs to the protein kinase superfamily. CAMK Ser/Thr protein kinase family. SNF1 subfamily. In terms of assembly, AMPK is a heterotrimer of an alpha catalytic subunit (PRKAA1 or PRKAA2), a beta (PRKAB1 or PRKAB2) and a gamma non-catalytic subunits (PRKAG1, PRKAG2 or PRKAG3). Interacts with FNIP1 and FNIP2. Mg(2+) is required as a cofactor. In terms of processing, ubiquitinated. Post-translationally, phosphorylated at Thr-183 by STK11/LKB1 in complex with STE20-related adapter-alpha (STRADA) pseudo kinase and CAB39. Also phosphorylated at Thr-183 by CAMKK2; triggered by a rise in intracellular calcium ions, without detectable changes in the AMP/ATP ratio. CAMKK1 can also phosphorylate Thr-183, but at a much lower level. Dephosphorylated by protein phosphatase 2A and 2C (PP2A and PP2C). Phosphorylated by ULK1 and ULK2; leading to negatively regulate AMPK activity and suggesting the existence of a regulatory feedback loop between ULK1, ULK2 and AMPK. There is some ambiguity for some phosphosites: Ser-360/Thr-368 and Ser-486/Thr-488. Dephosphorylated by PPM1A and PPM1B. Glycosylated; O-GlcNAcylated by OGT, promoting the AMP-activated protein kinase (AMPK) activity. In terms of tissue distribution, low expression in kidney, liver, lung, heart and brain.

Its subcellular location is the cytoplasm. The protein resides in the nucleus. It catalyses the reaction L-seryl-[protein] + ATP = O-phospho-L-seryl-[protein] + ADP + H(+). The enzyme catalyses L-threonyl-[protein] + ATP = O-phospho-L-threonyl-[protein] + ADP + H(+). It carries out the reaction L-seryl-[acetyl-CoA carboxylase] + ATP = O-phospho-L-seryl-[acetyl-CoA carboxylase] + ADP + H(+). The catalysed reaction is L-seryl-[3-hydroxy-3-methylglutaryl-coenzyme A reductase] + ATP = O-phospho-L-seryl-[3-hydroxy-3-methylglutaryl-coenzyme A reductase] + ADP + H(+). It catalyses the reaction L-seryl-[tau protein] + ATP = O-phospho-L-seryl-[tau protein] + ADP + H(+). The enzyme catalyses L-threonyl-[tau protein] + ATP = O-phospho-L-threonyl-[tau protein] + ADP + H(+). Its activity is regulated as follows. Activated by phosphorylation on Thr-183. Binding of AMP to non-catalytic gamma subunit (PRKAG1, PRKAG2 or PRKAG3) results in allosteric activation, inducing phosphorylation on Thr-183. AMP-binding to gamma subunit also sustains activity by preventing dephosphorylation of Thr-183. ADP also stimulates Thr-183 phosphorylation, without stimulating already phosphorylated AMPK. ATP promotes dephosphorylation of Thr-183, rendering the enzyme inactive. Under physiological conditions AMPK mainly exists in its inactive form in complex with ATP, which is much more abundant than AMP. Selectively inhibited by compound C (6-[4-(2-Piperidin-1-yl-ethoxy)-phenyl)]-3-pyridin-4-yl-pyyrazolo[1,5-a] pyrimidine. Activated by resveratrol, a natural polyphenol present in red wine, and S17834, a synthetic polyphenol. In terms of biological role, catalytic subunit of AMP-activated protein kinase (AMPK), an energy sensor protein kinase that plays a key role in regulating cellular energy metabolism. In response to reduction of intracellular ATP levels, AMPK activates energy-producing pathways and inhibits energy-consuming processes: inhibits protein, carbohydrate and lipid biosynthesis, as well as cell growth and proliferation. AMPK acts via direct phosphorylation of metabolic enzymes, and by longer-term effects via phosphorylation of transcription regulators. Regulates lipid synthesis by phosphorylating and inactivating lipid metabolic enzymes such as ACACA, ACACB, GYS1, HMGCR and LIPE; regulates fatty acid and cholesterol synthesis by phosphorylating acetyl-CoA carboxylase (ACACA and ACACB) and hormone-sensitive lipase (LIPE) enzymes, respectively. Promotes lipolysis of lipid droplets by mediating phosphorylation of isoform 1 of CHKA (CHKalpha2). Regulates insulin-signaling and glycolysis by phosphorylating IRS1, PFKFB2 and PFKFB3. AMPK stimulates glucose uptake in muscle by increasing the translocation of the glucose transporter SLC2A4/GLUT4 to the plasma membrane, possibly by mediating phosphorylation of TBC1D4/AS160. Regulates transcription and chromatin structure by phosphorylating transcription regulators involved in energy metabolism such as CRTC2/TORC2, FOXO3, histone H2B, HDAC5, MEF2C, MLXIPL/ChREBP, EP300, HNF4A, p53/TP53, SREBF1, SREBF2 and PPARGC1A. Acts as a key regulator of glucose homeostasis in liver by phosphorylating CRTC2/TORC2, leading to CRTC2/TORC2 sequestration in the cytoplasm. In response to stress, phosphorylates 'Ser-36' of histone H2B (H2BS36ph), leading to promote transcription. Acts as a key regulator of cell growth and proliferation by phosphorylating FNIP1, TSC2, RPTOR, WDR24 and ATG1/ULK1: in response to nutrient limitation, negatively regulates the mTORC1 complex by phosphorylating RPTOR component of the mTORC1 complex and by phosphorylating and activating TSC2. Also phosphorylates and inhibits GATOR2 subunit WDR24 in response to nutrient limitation, leading to suppress glucose-mediated mTORC1 activation. In response to energetic stress, phosphorylates FNIP1, inactivating the non-canonical mTORC1 signaling, thereby promoting nuclear translocation of TFEB and TFE3, and inducing transcription of lysosomal or autophagy genes. In response to nutrient limitation, promotes autophagy by phosphorylating and activating ATG1/ULK1. In that process, it also activates WDR45/WIPI4. Phosphorylates CASP6, thereby preventing its autoprocessing and subsequent activation. In response to nutrient limitation, phosphorylates transcription factor FOXO3 promoting FOXO3 mitochondrial import. Also acts as a regulator of cellular polarity by remodeling the actin cytoskeleton; probably by indirectly activating myosin. AMPK also acts as a regulator of circadian rhythm by mediating phosphorylation of CRY1, leading to destabilize it. May regulate the Wnt signaling pathway by phosphorylating CTNNB1, leading to stabilize it. Also has tau-protein kinase activity: in response to amyloid beta A4 protein (APP) exposure, activated by CAMKK2, leading to phosphorylation of MAPT/TAU; however the relevance of such data remains unclear in vivo. Also phosphorylates CFTR, EEF2K, KLC1, NOS3 and SLC12A1. Regulates hepatic lipogenesis. Activated via SIRT3, represses sterol regulatory element-binding protein (SREBP) transcriptional activities and ATP-consuming lipogenesis to restore cellular energy balance. Upon stress, regulates mitochondrial fragmentation through phosphorylation of MTFR1L. This Rattus norvegicus (Rat) protein is 5'-AMP-activated protein kinase catalytic subunit alpha-1 (Prkaa1).